Here is a 190-residue protein sequence, read N- to C-terminus: CD70 antigen (190 aa).

Topologically, residues methionine 1 to serine 17 are cytoplasmic. The helical transmembrane segment at isoleucine 18 to glycine 38 threads the bilayer. Residues glutamine 39–proline 190 lie on the Extracellular side of the membrane. The region spanning aspartate 52 to valine 188 is the THD domain. N-linked (GlcNAc...) asparagine glycans are attached at residues asparagine 59 and asparagine 110. Disulfide bonds link cysteine 111-cysteine 148 and cysteine 130-cysteine 165. Residue asparagine 167 is glycosylated (N-linked (GlcNAc...) asparagine).

The protein belongs to the tumor necrosis factor family. In terms of assembly, homotrimer. Post-translationally, N-glycosylated.

The protein resides in the cell membrane. Expressed at the plasma membrane of B cells, it is the ligand of the CD27 receptor which is specifically expressed at the surface of T cells. The CD70-CD27 signaling pathway mediates antigen-specific T cell activation and expansion which in turn provides immune surveillance of B cells. In Sus scrofa (Pig), this protein is CD70 antigen.